Consider the following 507-residue polypeptide: Dihydrolipoyllysine-residue acetyltransferase component of pyruvate dehydrogenase complex, mitochondrial (507 aa).

Residues 77-153 (HNRVALPALS…PIGKLLCIIV (77 aa)) form the Lipoyl-binding domain. An N6-lipoyllysine modification is found at K118. Disordered regions lie at residues 168-223 (DGAS…VSAS) and 248-270 (RILA…TQAV). The region spanning 221-258 (SASPFAKKLAAENGLDLSGVSGSGPGGRILASDLSQAP) is the Peripheral subunit-binding (PSBD) domain. Active-site residues include H480 and D484.

It belongs to the 2-oxoacid dehydrogenase family. Requires (R)-lipoate as cofactor.

The protein resides in the mitochondrion matrix. The enzyme catalyses N(6)-[(R)-dihydrolipoyl]-L-lysyl-[protein] + acetyl-CoA = N(6)-[(R)-S(8)-acetyldihydrolipoyl]-L-lysyl-[protein] + CoA. In terms of biological role, the pyruvate dehydrogenase complex catalyzes the overall conversion of pyruvate to acetyl-CoA and CO(2). It contains multiple copies of three enzymatic components: pyruvate dehydrogenase (E1), dihydrolipoamide acetyltransferase (E2) and lipoamide dehydrogenase (E3). This Caenorhabditis elegans protein is Dihydrolipoyllysine-residue acetyltransferase component of pyruvate dehydrogenase complex, mitochondrial.